We begin with the raw amino-acid sequence, 901 residues long: HTH-type transcriptional regulator MalT (901 aa).

Residue 39 to 46 (SPAGYGKT) coordinates ATP. In terms of domain architecture, HTH luxR-type spans 829–894 (ELIRTSPLTQ…AAVQHAQKLL (66 aa)). The H-T-H motif DNA-binding region spans 853–872 (NEQIAGELEVAATTIKTHIR).

Belongs to the MalT family. As to quaternary structure, monomer in solution. Oligomerizes to an active state in the presence of the positive effectors ATP and maltotriose.

Its activity is regulated as follows. Activated by ATP and maltotriose, which are both required for DNA binding. Its function is as follows. Positively regulates the transcription of the maltose regulon whose gene products are responsible for uptake and catabolism of malto-oligosaccharides. Specifically binds to the promoter region of its target genes, recognizing a short DNA motif called the MalT box. In Shigella boydii serotype 4 (strain Sb227), this protein is HTH-type transcriptional regulator MalT.